The following is a 427-amino-acid chain: Homeotic protein caudal (427 aa).

The tract at residues 104–273 (QLMQQHHHHH…QPQPGKTRTK (170 aa)) is disordered. Low complexity predominate over residues 116–129 (ASSSSASSGSSSSG). Residues 145–164 (GVGGAGGGGGVGGATDGGPG) are compositionally biased toward gly residues. The segment covering 183–195 (ITVSGSEISSPGA) has biased composition (polar residues). The span at 209 to 243 (HLSAVANNNNNNNNNNNSPSTHNNNNNNNSVSNNN) shows a compositional bias: low complexity. T245 carries the post-translational modification Phosphothreonine. An Antp-type hexapeptide motif is present at residues 252 to 257 (YFDWMK). The homeobox DNA-binding region spans 273 to 332 (KDKYRVVYTDFQRLELEKEYCTSRYITIRRKSELAQTLSLSERQVKIWFQNRRAKERKQN).

It belongs to the Caudal homeobox family. As to expression, maternally localized in an anteroposterior gradient in the syncytial blastoderm. Also expressed in the pole cells. Zygotically localized in the primordia of the terminal abdominal segment, the hindgut and in the posterior midgut rudiment. Expressed in the gut, the gonads and parts of the genital disks of third instar larvae (at protein level).

The protein localises to the nucleus. In terms of biological role, caudal (cad) is one of a number of transcription factors controlling segmentation of the embryo. Further transcriptional regulation via a 5' flanking region containing DNA replication-related elements (DRE) and by dref also regulated by trh and tgo via the CNS midline element. Alongside Bicoid (bcd), caudal forms concentration gradients down the anterior-posterior (A-P) axis providing positional information and subsequent induction of the gap genes. Plays a role in gastrulation/germ band extension, hindgut morphogenesis, positive regulation of cell proliferation, genital disk development and pattern formation. Acts as a key regulator of the Hox gene network and activates transcription via the downstream core promoter element (DPE) relative to the TATA box. Plays a role in the establishment of the hindgut and in the invagination of the hindgut primordium during gastrulation. These effects on the gut are achieved by acting combinatorially at the posterior of the embryo to activate transcription of different targets including fog, fkh and wg. Caudal is involved in regulation of proliferation through transactivation of the E2F gene. Postembryonically its function is mostly restricted to the intestine where it regulates antimicrobial peptide (AMP) levels preserving the normal gut flora. The sequence is that of Homeotic protein caudal (cad) from Drosophila melanogaster (Fruit fly).